The chain runs to 240 residues: Lysoplasmalogenase TMEM86A (240 aa).

The Cytoplasmic portion of the chain corresponds to 1–21; sequence MVSPVTVVKSEGPKLVPFFKA. A helical membrane pass occupies residues 22 to 42; that stretch reads TCVYFVLWLPSSSPSWVSALI. Position 43 (K43) is a topological domain, extracellular. The chain crosses the membrane as a helical span at residues 44-64; the sequence is CLPIFCLWLFLLAHGLGFLLT. Over 65 to 70 the chain is Cytoplasmic; it reads HPSATR. A helical transmembrane segment spans residues 71 to 91; it reads IFVGLVFSAIGDAFLIWQDQG. Y92 is a topological domain (extracellular). Residues 93 to 113 form a helical membrane-spanning segment; the sequence is FVHGMLMFAVTHMLYASAFGM. At 114–115 the chain is on the cytoplasmic side; that stretch reads RP. The helical transmembrane segment at 116 to 136 threads the bilayer; that stretch reads LGLRTGLLMVILSGLCYAFLY. At 137–138 the chain is on the extracellular side; sequence PN. The chain crosses the membrane as a helical span at residues 139 to 159; the sequence is LTGAFTYVVGVYVAIIGFMGW. At 160-174 the chain is on the cytoplasmic side; that stretch reads RAMAGLQLVGAAWRW. Residues 175–195 traverse the membrane as a helical segment; it reads TELAAGTGALLFIVSDLTIAL. The Extracellular segment spans residues 196-206; it reads DKFCFPVPYSR. A helical transmembrane segment spans residues 207–227; sequence ALIMSTYYAAQMLIALSAVES. At 228–240 the chain is on the cytoplasmic side; that stretch reads REPVEDYRLSKAK.

This sequence belongs to the TMEM86 family.

The protein resides in the endoplasmic reticulum membrane. The enzyme catalyses a 1-O-(1Z-alkenyl)-sn-glycero-3-phosphocholine + H2O = a 2,3-saturated aldehyde + sn-glycerol 3-phosphocholine. The catalysed reaction is a 1-O-(1Z-alkenyl)-sn-glycero-3-phosphoethanolamine + H2O = a 2,3-saturated aldehyde + sn-glycero-3-phosphoethanolamine. Functionally, catalyzes the hydrolysis of the vinyl ether bond of choline or ethanolamine lysoplasmalogens, forming fatty aldehyde and glycerophosphocholine or glycerophosphoethanolamine, respectively and is specific for the sn-2-deacylated (lyso) form of plasmalogen. Plays an important role in lysoplasmalogen metabolism in the adipocyte tissue and macrophages. This is Lysoplasmalogenase TMEM86A (TMEM86A) from Bos taurus (Bovine).